The chain runs to 447 residues: Argininosuccinate synthase (447 aa).

Residues 20–28 (AFSGGLDTS) and Ala-46 each bind ATP. Residue Tyr-102 participates in L-citrulline binding. Positions 132 and 134 each coordinate ATP. L-aspartate contacts are provided by Thr-134, Asn-138, and Asp-139. L-citrulline is bound at residue Asn-138. Residue Asp-139 coordinates ATP. Residues Arg-142 and Ser-195 each contribute to the L-citrulline site. Asp-197 lines the ATP pocket. L-citrulline is bound by residues Thr-204, Glu-206, and Glu-283.

This sequence belongs to the argininosuccinate synthase family. Type 2 subfamily. As to quaternary structure, homotetramer.

The protein localises to the cytoplasm. It catalyses the reaction L-citrulline + L-aspartate + ATP = 2-(N(omega)-L-arginino)succinate + AMP + diphosphate + H(+). It functions in the pathway amino-acid biosynthesis; L-arginine biosynthesis; L-arginine from L-ornithine and carbamoyl phosphate: step 2/3. The protein is Argininosuccinate synthase of Neisseria gonorrhoeae (strain ATCC 700825 / FA 1090).